The primary structure comprises 192 residues: A-type ATP synthase subunit E (192 aa).

This sequence belongs to the V-ATPase E subunit family. Has multiple subunits with at least A(3), B(3), C, D, E, F, H, I and proteolipid K(x).

The protein localises to the cell membrane. Component of the A-type ATP synthase that produces ATP from ADP in the presence of a proton gradient across the membrane. In Sulfolobus acidocaldarius (strain ATCC 33909 / DSM 639 / JCM 8929 / NBRC 15157 / NCIMB 11770), this protein is A-type ATP synthase subunit E.